Here is a 354-residue protein sequence, read N- to C-terminus: Probable calcium-binding protein CML50 (354 aa).

Low complexity-rich tracts occupy residues 1 to 10 (MSGYPPTSQG) and 28 to 71 (YSSG…SSYG). The segment at 1–159 (MSGYPPTSQG…PASSGHGGGY (159 aa)) is disordered. The segment covering 72–81 (APPPSAPYAP) has biased composition (pro residues). The span at 106–117 (GSSDYGSYGAGP) shows a compositional bias: low complexity. EF-hand domains are found at residues 183-218 (GTDP…YQQR) and 249-284 (YSLQ…LGFS). 9 residues coordinate Ca(2+): D196, D198, S200, E207, D262, D264, S266, R268, and E273.

Potential calcium sensor. The polypeptide is Probable calcium-binding protein CML50 (CML50) (Arabidopsis thaliana (Mouse-ear cress)).